The following is a 119-amino-acid chain: MKCIAIVSTICLLAAFVAADKEDKMLGSSYGGGYGKPAAAPAPSYSAPAAAPQAYAAPAAPSYAAAPVSIPAPPCPKNYLFSCQPNLAPVPCSAPAPSYGSAGAYSQYAPVYAPQPIQW.

The signal sequence occupies residues 1–19 (MKCIAIVSTICLLAAFVAA). A VM domain is found at 69–106 (SIPAPPCPKNYLFSCQPNLAPVPCSAPAPSYGSAGAYS).

The protein belongs to the vitelline membrane protein family. Follicle cells.

The protein resides in the secreted. Major early eggshell protein. The polypeptide is Vitelline membrane protein Vm34Ca (Vm34Ca) (Drosophila melanogaster (Fruit fly)).